A 522-amino-acid chain; its full sequence is Cytochrome P450 1A3 (522 aa).

Phe229 is a binding site for substrate. Residue Cys463 participates in heme binding.

This sequence belongs to the cytochrome P450 family. The cofactor is heme. Liver.

It localises to the endoplasmic reticulum membrane. The protein resides in the microsome membrane. The enzyme catalyses an organic molecule + reduced [NADPH--hemoprotein reductase] + O2 = an alcohol + oxidized [NADPH--hemoprotein reductase] + H2O + H(+). In terms of biological role, cytochromes P450 are a group of heme-thiolate monooxygenases. They oxidize a variety of structurally unrelated compounds, including steroids, fatty acids, and xenobiotics. The sequence is that of Cytochrome P450 1A3 (cyp1a3) from Oncorhynchus mykiss (Rainbow trout).